The following is a 136-amino-acid chain: MRYFIGIASKNHIQIGQAGGFCQLCHGKAAPLKRMKQNDKIIYYSPKLTMESKEPYQAFTALGEIADENVYQVEMFKGFFPFRRNVLWSEIKRECPLNVAKTHPEWKAYASKLRFGHFEVSKEFFNFLAEYMTQDS.

Belongs to the UPF0310 family.

This Helicobacter hepaticus (strain ATCC 51449 / 3B1) protein is UPF0310 protein HH_1062.